The sequence spans 186 residues: MNVLSIMDDLKRRMDGAISAFQHELGGLRTGRASASLLEPLTVEAYGSVVHINQVANISVPEPRMLSVSVWDKTMVGAVERAIRDSGLGLNPITDGMNLRIPLPELNEERRKELVKIAHQYAEQARVATRHVRRDGMDNLKKLEKEGEISQDEAHGLSEKVQKLTDETIANIDKILAVKESEIMHV.

Belongs to the RRF family.

It is found in the cytoplasm. Responsible for the release of ribosomes from messenger RNA at the termination of protein biosynthesis. May increase the efficiency of translation by recycling ribosomes from one round of translation to another. The sequence is that of Ribosome-recycling factor from Bartonella quintana (strain Toulouse) (Rochalimaea quintana).